The sequence spans 181 residues: Ribosome maturation factor RimM (181 aa).

The region spanning 97-170 (AGEFWLPDLM…RIEVVAIPGL (74 aa)) is the PRC barrel domain.

Belongs to the RimM family. In terms of assembly, binds ribosomal protein uS19.

Its subcellular location is the cytoplasm. In terms of biological role, an accessory protein needed during the final step in the assembly of 30S ribosomal subunit, possibly for assembly of the head region. Essential for efficient processing of 16S rRNA. May be needed both before and after RbfA during the maturation of 16S rRNA. It has affinity for free ribosomal 30S subunits but not for 70S ribosomes. In Gloeobacter violaceus (strain ATCC 29082 / PCC 7421), this protein is Ribosome maturation factor RimM.